The sequence spans 876 residues: Alanine--tRNA ligase (876 aa).

Position 74 is an N6-acetyllysine (Lys74). 4 residues coordinate Zn(2+): His564, His568, Cys666, and His670.

It belongs to the class-II aminoacyl-tRNA synthetase family. As to quaternary structure, homotetramer. It depends on Zn(2+) as a cofactor.

The protein resides in the cytoplasm. The enzyme catalyses tRNA(Ala) + L-alanine + ATP = L-alanyl-tRNA(Ala) + AMP + diphosphate. Catalyzes the attachment of alanine to tRNA(Ala) in a two-step reaction: alanine is first activated by ATP to form Ala-AMP and then transferred to the acceptor end of tRNA(Ala). Also edits incorrectly charged Ser-tRNA(Ala) and Gly-tRNA(Ala) via its editing domain. This is Alanine--tRNA ligase from Escherichia coli (strain SMS-3-5 / SECEC).